The chain runs to 844 residues: Rho guanine nucleotide exchange factor 33 (844 aa).

Basic and acidic residues-rich tracts occupy residues 1-13 (MEKT…ENEH) and 101-113 (QQKI…EKRR). 3 disordered regions span residues 1–20 (MEKT…NNPS), 101–142 (QQKI…GSPF), and 169–189 (AQES…MGPG). Positions 54-129 (LEEKVKSCRC…AKKTQKEEHS (76 aa)) form a coiled coil. Residues 130 to 142 (SQAGPAQAQGSPF) show a composition bias toward polar residues. The DH domain maps to 265-440 (KRQTVALELL…RVFISHYTLL (176 aa)). Disordered stretches follow at residues 498–541 (LQPY…DWEL), 668–687 (RPEH…AGSS), and 702–745 (AKPL…RAAQ). An Omega-N-methylarginine modification is found at R757. The span at 787–800 (DTTRFCPKEERESE) shows a compositional bias: basic and acidic residues. Positions 787 to 844 (DTTRFCPKEERESEQTSFSDQNPRQDQKGGFRSSFRKLFKKKNGNATGEDFCGPWGWW) are disordered. Residues 820-829 (SFRKLFKKKN) show a composition bias toward basic residues.

In terms of biological role, may act as a guanine-nucleotide releasing factor. The sequence is that of Rho guanine nucleotide exchange factor 33 (ARHGEF33) from Homo sapiens (Human).